A 118-amino-acid polypeptide reads, in one-letter code: Small ribosomal subunit protein uS13 (118 aa).

The segment at 94–118 (GLPVRGQRTKTNARTRKGPRKPIKK) is disordered.

This sequence belongs to the universal ribosomal protein uS13 family. As to quaternary structure, part of the 30S ribosomal subunit. Forms a loose heterodimer with protein S19. Forms two bridges to the 50S subunit in the 70S ribosome.

Located at the top of the head of the 30S subunit, it contacts several helices of the 16S rRNA. In the 70S ribosome it contacts the 23S rRNA (bridge B1a) and protein L5 of the 50S subunit (bridge B1b), connecting the 2 subunits; these bridges are implicated in subunit movement. Contacts the tRNAs in the A and P-sites. The chain is Small ribosomal subunit protein uS13 from Erwinia tasmaniensis (strain DSM 17950 / CFBP 7177 / CIP 109463 / NCPPB 4357 / Et1/99).